Here is a 126-residue protein sequence, read N- to C-terminus: Fluoride-specific ion channel FluC (126 aa).

4 helical membrane passes run 6–26, 32–52, 68–90, and 102–122; these read VLLVGAGGFAGSVARYLVALA, TGFPFATFAVNLLGSFLIGFI, LLLTTGFCGGFTTFSTAMYETGG, and LYVAGSLAGGLACLFSGTLLA. The Na(+) site is built by G76 and T79.

It belongs to the fluoride channel Fluc/FEX (TC 1.A.43) family.

Its subcellular location is the cell inner membrane. It carries out the reaction fluoride(in) = fluoride(out). With respect to regulation, na(+) is not transported, but it plays an essential structural role and its presence is essential for fluoride channel function. Its function is as follows. Fluoride-specific ion channel. Important for reducing fluoride concentration in the cell, thus reducing its toxicity. The chain is Fluoride-specific ion channel FluC from Chlorobaculum tepidum (strain ATCC 49652 / DSM 12025 / NBRC 103806 / TLS) (Chlorobium tepidum).